Consider the following 361-residue polypeptide: Tetraacyldisaccharide 4'-kinase (361 aa).

68–75 is a binding site for ATP; it reads TVGGTGKT.

The protein belongs to the LpxK family.

It catalyses the reaction a lipid A disaccharide + ATP = a lipid IVA + ADP + H(+). Its pathway is glycolipid biosynthesis; lipid IV(A) biosynthesis; lipid IV(A) from (3R)-3-hydroxytetradecanoyl-[acyl-carrier-protein] and UDP-N-acetyl-alpha-D-glucosamine: step 6/6. Its function is as follows. Transfers the gamma-phosphate of ATP to the 4'-position of a tetraacyldisaccharide 1-phosphate intermediate (termed DS-1-P) to form tetraacyldisaccharide 1,4'-bis-phosphate (lipid IVA). The protein is Tetraacyldisaccharide 4'-kinase of Pelobacter propionicus (strain DSM 2379 / NBRC 103807 / OttBd1).